The chain runs to 80 residues: MTITNEQVERINELARKKKAEGLSEAELEEQALLRRAYLDSVKANFRSQVETIKVIDEKTGEDVTPDKLKEIQRKNGMRD.

The protein belongs to the UPF0291 family.

Its subcellular location is the cytoplasm. This is UPF0291 protein llmg_1475 from Lactococcus lactis subsp. cremoris (strain MG1363).